Reading from the N-terminus, the 459-residue chain is Limonoid 7-O-acetyltransferse (459 aa).

Residues His167 and Asp391 each act as proton acceptor in the active site.

Belongs to the plant acyltransferase family. In terms of assembly, monomer. In terms of tissue distribution, expressed in maturing fruits and in juice vesicles.

It catalyses the reaction (1S)-1-acetoxy-luvungin A + acetyl-CoA = (1S)-1,7-diacetoxy-luvungin A + CoA. It participates in secondary metabolite biosynthesis; terpenoid biosynthesis. Acetyltransferase involved in the biosynthesis of limonoids triterpene natural products such as limonin, a compound with insecticidal activity responsible for the bitter taste in citrus. Catalyzes the formation of (1S)-1,7-diacetoxy-luvungin A from (1S)-1-acetoxy-luvungin A. This chain is Limonoid 7-O-acetyltransferse, found in Citrus sinensis (Sweet orange).